Here is a 184-residue protein sequence, read N- to C-terminus: dCTP deaminase (184 aa).

DCTP is bound at residue 107–112 (KSTIAR). The Proton donor/acceptor role is filled by glutamate 133. DCTP contacts are provided by glutamine 152, tyrosine 166, and glutamine 176.

It belongs to the dCTP deaminase family. In terms of assembly, homotrimer.

The enzyme catalyses dCTP + H2O + H(+) = dUTP + NH4(+). It functions in the pathway pyrimidine metabolism; dUMP biosynthesis; dUMP from dCTP (dUTP route): step 1/2. Functionally, catalyzes the deamination of dCTP to dUTP. The polypeptide is dCTP deaminase (Roseiflexus castenholzii (strain DSM 13941 / HLO8)).